Consider the following 170-residue polypeptide: Photosystem I assembly protein Ycf3 (170 aa).

TPR repeat units follow at residues 35-69, 73-106, and 121-154; these read AFTY…EIDP, SYIL…NPSL, and GEQA…APGN.

Belongs to the Ycf3 family.

It localises to the plastid. Its subcellular location is the chloroplast thylakoid membrane. Its function is as follows. Essential for the assembly of the photosystem I (PSI) complex. May act as a chaperone-like factor to guide the assembly of the PSI subunits. This Cycas taitungensis (Prince sago) protein is Photosystem I assembly protein Ycf3.